We begin with the raw amino-acid sequence, 304 residues long: MNHLTAMSELSAAEITELLREAKAIKEGTVRHDLAGKFVANLFFEPSTRTRFSFEVAEKKLGMNVLSLDDTSTSVQKGESLYDTVKTLESIGADACVIRHSTDEYYKDLTGRVNIPILNAGDGCGQHPTQSLLDLMTIQEEFETFQGLTVSIHGDIKHSRVARSNAEVLTRLGARVLFSGPPQWQDEKNAFGTCVQTDEAIQASDVVMLLRIQNERHQTEADQKGYLEAYGLTAKRAESMKRHAIIMHPAPVNRGVEIDTTLVECGKSRIFKQMENGVYIRMAVLKRALQTNVKRGEAAYVLSH.

Carbamoyl phosphate is bound by residues Arg-49 and Thr-50. Lys-77 contributes to the L-aspartate binding site. Arg-99, His-127, and Gln-130 together coordinate carbamoyl phosphate. L-aspartate is bound by residues Arg-160 and Arg-211. Residues Ala-250 and Pro-251 each contribute to the carbamoyl phosphate site.

The protein belongs to the aspartate/ornithine carbamoyltransferase superfamily. ATCase family. Heterododecamer (2C3:3R2) of six catalytic PyrB chains organized as two trimers (C3), and six regulatory PyrI chains organized as three dimers (R2).

It catalyses the reaction carbamoyl phosphate + L-aspartate = N-carbamoyl-L-aspartate + phosphate + H(+). It functions in the pathway pyrimidine metabolism; UMP biosynthesis via de novo pathway; (S)-dihydroorotate from bicarbonate: step 2/3. Functionally, catalyzes the condensation of carbamoyl phosphate and aspartate to form carbamoyl aspartate and inorganic phosphate, the committed step in the de novo pyrimidine nucleotide biosynthesis pathway. The polypeptide is Aspartate carbamoyltransferase catalytic subunit (Bacillus velezensis (strain DSM 23117 / BGSC 10A6 / LMG 26770 / FZB42) (Bacillus amyloliquefaciens subsp. plantarum)).